A 146-amino-acid chain; its full sequence is Small ribosomal subunit protein uS15 (146 aa).

The protein belongs to the universal ribosomal protein uS15 family. In terms of assembly, part of the 30S ribosomal subunit.

The protein is Small ribosomal subunit protein uS15 of Picrophilus torridus (strain ATCC 700027 / DSM 9790 / JCM 10055 / NBRC 100828 / KAW 2/3).